The sequence spans 296 residues: Protoheme IX farnesyltransferase (296 aa).

9 helical membrane-spanning segments follow: residues 8-28, 35-55, 84-104, 107-127, 132-152, 162-182, 208-228, 229-249, and 263-283; these read VTKPGIIFGNLISVVGGFLLA, YPLFLATLVGVSLVVASGCVF, VSLVYATALGIAGFALLYIGA, LAMWLAVMGFVVYVGVYSLYM, VYGTLIGSLSGAAPPVIGYCA, LILLAIFSLWQMPHSYAIAIF, ITVYIVAFMIATLMLTLGGYA, GYKYLIVAAAVSVWWLGMALR, and LFVFSIVAITSLSVMMSIDFS.

Belongs to the UbiA prenyltransferase family. Protoheme IX farnesyltransferase subfamily.

The protein localises to the cell inner membrane. It carries out the reaction heme b + (2E,6E)-farnesyl diphosphate + H2O = Fe(II)-heme o + diphosphate. The protein operates within porphyrin-containing compound metabolism; heme O biosynthesis; heme O from protoheme: step 1/1. In terms of biological role, converts heme B (protoheme IX) to heme O by substitution of the vinyl group on carbon 2 of heme B porphyrin ring with a hydroxyethyl farnesyl side group. The protein is Protoheme IX farnesyltransferase of Serratia proteamaculans (strain 568).